The primary structure comprises 172 residues: Capsid protein (172 aa).

This sequence belongs to the nanoviridae capsid protein family.

The protein resides in the virion. In Astragalus sinicus (Chinese milk vetch), this protein is Capsid protein (DNA-S).